Reading from the N-terminus, the 247-residue chain is Adenosylcobinamide-GDP ribazoletransferase (247 aa).

6 helical membrane passes run 34–54, 59–79, 113–133, 138–158, 171–191, and 194–214; these read IVMFPFIGLILGGVSGLIFIL, CGIPLAALFCILALALLTGGF, GGLALIFVLLAKILVVSELAL, MLAALAAACAAGRGSAVLLMY, VFIGKVSGRQTCITLGLAVIV, and VLLPGMQGLAAMVVTLAAIFI.

Belongs to the CobS family. The cofactor is Mg(2+).

It is found in the cell inner membrane. The catalysed reaction is alpha-ribazole + adenosylcob(III)inamide-GDP = adenosylcob(III)alamin + GMP + H(+). It carries out the reaction alpha-ribazole 5'-phosphate + adenosylcob(III)inamide-GDP = adenosylcob(III)alamin 5'-phosphate + GMP + H(+). It participates in cofactor biosynthesis; adenosylcobalamin biosynthesis; adenosylcobalamin from cob(II)yrinate a,c-diamide: step 7/7. Functionally, joins adenosylcobinamide-GDP and alpha-ribazole to generate adenosylcobalamin (Ado-cobalamin). Also synthesizes adenosylcobalamin 5'-phosphate from adenosylcobinamide-GDP and alpha-ribazole 5'-phosphate. The protein is Adenosylcobinamide-GDP ribazoletransferase of Salmonella schwarzengrund (strain CVM19633).